A 492-amino-acid chain; its full sequence is Catalase-3 (492 aa).

Residues histidine 65 and asparagine 138 contribute to the active site. Tyrosine 348 contributes to the heme binding site.

The protein belongs to the catalase family. As to quaternary structure, homotetramer. Heme serves as cofactor.

The protein localises to the peroxisome. The protein resides in the glyoxysome. The catalysed reaction is 2 H2O2 = O2 + 2 H2O. Its function is as follows. Occurs in almost all aerobically respiring organisms and serves to protect cells from the toxic effects of hydrogen peroxide. The sequence is that of Catalase-3 (CAT3) from Glycine max (Soybean).